A 325-amino-acid polypeptide reads, in one-letter code: Glutarate 2-hydroxylase (325 aa).

3 residues coordinate Fe cation: His-160, Asp-162, and His-292.

Belongs to the glutarate hydroxylase family. In terms of assembly, homotetramer. Fe(2+) is required as a cofactor.

It catalyses the reaction glutarate + 2-oxoglutarate + O2 = (S)-2-hydroxyglutarate + succinate + CO2. Its pathway is amino-acid degradation. Its function is as follows. Acts as an alpha-ketoglutarate-dependent dioxygenase catalyzing hydroxylation of glutarate (GA) to L-2-hydroxyglutarate (L2HG). Functions in a L-lysine degradation pathway that proceeds via cadaverine, glutarate and L-2-hydroxyglutarate. In Escherichia coli O157:H7, this protein is Glutarate 2-hydroxylase.